The following is a 217-amino-acid chain: Protein-L-isoaspartate O-methyltransferase 2 (217 aa).

Serine 64 is a catalytic residue.

This sequence belongs to the methyltransferase superfamily. L-isoaspartyl/D-aspartyl protein methyltransferase family.

The protein resides in the cytoplasm. It carries out the reaction [protein]-L-isoaspartate + S-adenosyl-L-methionine = [protein]-L-isoaspartate alpha-methyl ester + S-adenosyl-L-homocysteine. Functionally, catalyzes the methyl esterification of L-isoaspartyl residues in peptides and proteins that result from spontaneous decomposition of normal L-aspartyl and L-asparaginyl residues. It plays a role in the repair and/or degradation of damaged proteins. This is Protein-L-isoaspartate O-methyltransferase 2 from Rhodopseudomonas palustris (strain HaA2).